The chain runs to 448 residues: MMMETRDPAIKLFGMKIPFPSVFESAVTVEDDEEDDWSGGDDKSPEKVTPELSDKNNNNCNDNSFNNSKPETLDKEEATSTDQIESSDTPEDNQQTTPDGKTLKKPTKILPCPRCKSMETKFCYYNNYNINQPRHFCKACQRYWTAGGTMRNVPVGAGRRKNKSSSSHYRHITISEALEAARLDPGLQANTRVLSFGLEAQQQHVAAPMTPVMKLQEDQKVSNGARNRFHGLADQRLVARVENGDDCSSGSSVTTSNNHSVDESRAQSGSVVEAQMNNNNNNNMNGYACIPGVPWPYTWNPAMPPPGFYPPPGYPMPFYPYWTIPMLPPHQSSSPISQKCSNTNSPTLGKHPRDEGSSKKDNETERKQKAGCVLVPKTLRIDDPNEAAKSSIWTTLGIKNEAMCKAGGMFKGFDHKTKMYNNDKAENSPVLSANPAALSRSHNFHEQI.

Residues 26–108 (AVTVEDDEED…DGKTLKKPTK (83 aa)) are disordered. The segment covering 29–39 (VEDDEEDDWSG) has biased composition (acidic residues). Positions 40–54 (GDDKSPEKVTPELSD) are enriched in basic and acidic residues. Residues 55–69 (KNNNNCNDNSFNNSK) show a composition bias toward low complexity. Positions 80 to 99 (STDQIESSDTPEDNQQTTPD) are enriched in polar residues. The segment at 110–164 (LPCPRCKSMETKFCYYNNYNINQPRHFCKACQRYWTAGGTMRNVPVGAGRRKNKS) adopts a Dof-type zinc-finger fold. Cys-112, Cys-115, Cys-137, and Cys-140 together coordinate Zn(2+). Disordered stretches follow at residues 243-269 (NGDDCSSGSSVTTSNNHSVDESRAQSG) and 332-370 (SSSPISQKCSNTNSPTLGKHPRDEGSSKKDNETERKQKA). 2 stretches are compositionally biased toward polar residues: residues 246 to 259 (DCSSGSSVTTSNNH) and 332 to 347 (SSSPISQKCSNTNSPT). Positions 351 to 368 (HPRDEGSSKKDNETERKQ) are enriched in basic and acidic residues.

In terms of assembly, interacts with ADO2 (via kelch repeats) and ADO3 (via kelch repeats). Expressed in the vasculature of cotyledons and hypocotyls, leaves and roots.

It localises to the nucleus. Its function is as follows. Transcription factor that binds specifically to a 5'-AA[AG]G-3' consensus core sequence. Regulates a photoperiodic flowering response. Transcriptional repressor of 'CONSTANS' expression. The chain is Cyclic dof factor 3 (CDF3) from Arabidopsis thaliana (Mouse-ear cress).